Here is a 957-residue protein sequence, read N- to C-terminus: Glycine dehydrogenase (decarboxylating) (957 aa).

Residue lysine 708 is modified to N6-(pyridoxal phosphate)lysine.

It belongs to the GcvP family. As to quaternary structure, the glycine cleavage system is composed of four proteins: P, T, L and H. It depends on pyridoxal 5'-phosphate as a cofactor.

The enzyme catalyses N(6)-[(R)-lipoyl]-L-lysyl-[glycine-cleavage complex H protein] + glycine + H(+) = N(6)-[(R)-S(8)-aminomethyldihydrolipoyl]-L-lysyl-[glycine-cleavage complex H protein] + CO2. In terms of biological role, the glycine cleavage system catalyzes the degradation of glycine. The P protein binds the alpha-amino group of glycine through its pyridoxal phosphate cofactor; CO(2) is released and the remaining methylamine moiety is then transferred to the lipoamide cofactor of the H protein. The sequence is that of Glycine dehydrogenase (decarboxylating) from Klebsiella pneumoniae subsp. pneumoniae (strain ATCC 700721 / MGH 78578).